Reading from the N-terminus, the 77-residue chain is Conotoxin Cl6.12 (77 aa).

The signal sequence occupies residues 1–20 (MKFYLLLTAALLLTAVIIEA). The propeptide occupies 21 to 36 (APTDHQDEARDLMREE). Intrachain disulfides connect cysteine 43–cysteine 58, cysteine 51–cysteine 62, and cysteine 57–cysteine 68.

In terms of tissue distribution, expressed by the venom duct.

It is found in the secreted. The protein is Conotoxin Cl6.12 of Californiconus californicus (California cone).